The following is a 405-amino-acid chain: L-carnitine CoA-transferase (405 aa).

CoA is bound by residues K97 and R104. The active-site Nucleophile is D169.

This sequence belongs to the CoA-transferase III family. CaiB subfamily. Homodimer.

The protein localises to the cytoplasm. It catalyses the reaction crotonobetainyl-CoA + (R)-carnitine = crotonobetaine + (R)-carnitinyl-CoA. It carries out the reaction 4-(trimethylamino)butanoyl-CoA + (R)-carnitine = (R)-carnitinyl-CoA + 4-(trimethylamino)butanoate. It functions in the pathway amine and polyamine metabolism; carnitine metabolism. In terms of biological role, catalyzes the reversible transfer of the CoA moiety from gamma-butyrobetainyl-CoA to L-carnitine to generate L-carnitinyl-CoA and gamma-butyrobetaine. Is also able to catalyze the reversible transfer of the CoA moiety from gamma-butyrobetainyl-CoA or L-carnitinyl-CoA to crotonobetaine to generate crotonobetainyl-CoA. This Salmonella enteritidis PT4 (strain P125109) protein is L-carnitine CoA-transferase.